Consider the following 752-residue polypeptide: Ribosomal protein S6 kinase 2 alpha (752 aa).

Residues Phe80–Tyr339 enclose the Protein kinase 1 domain. Residues Leu86–Val94 and Lys112 contribute to the ATP site. Asp205 functions as the Proton acceptor in the catalytic mechanism. Ser239 carries the phosphoserine modification. Positions Ser340–Lys409 constitute an AGC-kinase C-terminal domain. A Phosphothreonine modification is found at Thr377. Ser381 bears the Phosphoserine mark. Ser398 is modified (phosphoserine; by autocatalysis). A Protein kinase 2 domain is found at Tyr435 to Ile692. Residues Ile441 to Cys449 and Lys464 each bind ATP. Asp552 serves as the catalytic Proton acceptor. The residue at position 590 (Thr590) is a Phosphothreonine. Ser749 is subject to Phosphoserine.

The protein belongs to the protein kinase superfamily. AGC Ser/Thr protein kinase family. S6 kinase subfamily. It depends on Mg(2+) as a cofactor. Post-translationally, autophosphorylated on Ser-398, as part of the activation process. Small and large intestine, spleen, stomach, and bursa, and to a lesser extent lung and kidney.

The enzyme catalyses L-seryl-[protein] + ATP = O-phospho-L-seryl-[protein] + ADP + H(+). The catalysed reaction is L-threonyl-[protein] + ATP = O-phospho-L-threonyl-[protein] + ADP + H(+). Activated by multiple phosphorylations on threonine and serine residues. In terms of biological role, serine/threonine kinase that may play a role in mediating the growth-factor and stress induced activation of transcription. In Gallus gallus (Chicken), this protein is Ribosomal protein S6 kinase 2 alpha (RPS6KA).